Here is a 195-residue protein sequence, read N- to C-terminus: Cbp/p300-interacting transactivator 1 (195 aa).

2 disordered regions span residues 1 to 24 and 51 to 149; these read MPTM…NANP and ASNG…SPAI. Positions 54–78 are enriched in low complexity; that stretch reads GTKASGAPTSSSGSPSPISSSTATP. Residues 97–106 show a composition bias toward polar residues; the sequence is MQLQKLNSQY. Residues 137–148 show a composition bias toward low complexity; that stretch reads SLSPSAGAQSPA. The Nuclear export signal motif lies at 160–169; the sequence is LMSLVVELGL.

It belongs to the CITED family. In terms of assembly, interacts (via C-terminus) with CREBBP. Interacts with EGR2. Homodimer. Binds to RBM14. Interacts (via N-terminus) with HSPA8; the interaction suppresses the association of CITED1 with p300/CBP and SMAD-mediated transcription transactivation. Interacts (via C-terminus) with TOX3 (via HGM box); the interaction increases estrogen-response element (ERE)-dependent transcription and protection against cell death. Interacts with ESR1; the interaction occurs in a estrogen-dependent manner. Interacts (unphosphorylated form preferentially and via C-terminus) with EP300. In terms of processing, phosphorylated. Phosphorylation changes in a cell cycle-dependent manner and reduces its transcriptional cofactor activity.

Its subcellular location is the nucleus. It localises to the cytoplasm. Functionally, transcriptional coactivator of the p300/CBP-mediated transcription complex. Enhances SMAD-mediated transcription by strengthening the functional link between the DNA-binding SMAD transcription factors and the p300/CBP transcription coactivator complex. Stimulates estrogen-dependent transactivation activity mediated by estrogen receptors signaling; stabilizes the interaction of estrogen receptor ESR1 and histone acetyltransferase EP300. Positively regulates TGF-beta signaling through its association with the SMAD/p300/CBP-mediated transcriptional coactivator complex. Induces transcription from estrogen-responsive promoters and protection against cell death. Potentiates EGR2-mediated transcriptional activation activity from the ERBB2 promoter. Acts as an inhibitor of osteoblastic mineralization through a cAMP-dependent parathyroid hormone receptor signaling. May play a role in pigmentation of melanocytes. Associates with chromatin to the estrogen-responsive TGF-alpha promoter region in a estrogen-dependent manner. The sequence is that of Cbp/p300-interacting transactivator 1 (CITED1) from Bos taurus (Bovine).